Reading from the N-terminus, the 475-residue chain is Ribulose bisphosphate carboxylase large chain (475 aa).

A propeptide spanning residues 1 to 2 (MS) is cleaved from the precursor. Pro3 carries the post-translational modification N-acetylproline. Lys14 is subject to N6,N6,N6-trimethyllysine. Residues Asn123 and Thr173 each contribute to the substrate site. Lys175 (proton acceptor) is an active-site residue. Position 177 (Lys177) interacts with substrate. Residues Lys201, Asp203, and Glu204 each contribute to the Mg(2+) site. At Lys201 the chain carries N6-carboxylysine. Residue His294 is the Proton acceptor of the active site. Arg295, His327, and Ser379 together coordinate substrate.

The protein belongs to the RuBisCO large chain family. Type I subfamily. Heterohexadecamer of 8 large chains and 8 small chains; disulfide-linked. The disulfide link is formed within the large subunit homodimers. Mg(2+) serves as cofactor. In terms of processing, the disulfide bond which can form in the large chain dimeric partners within the hexadecamer appears to be associated with oxidative stress and protein turnover.

It localises to the plastid. Its subcellular location is the chloroplast. The catalysed reaction is 2 (2R)-3-phosphoglycerate + 2 H(+) = D-ribulose 1,5-bisphosphate + CO2 + H2O. It carries out the reaction D-ribulose 1,5-bisphosphate + O2 = 2-phosphoglycolate + (2R)-3-phosphoglycerate + 2 H(+). Functionally, ruBisCO catalyzes two reactions: the carboxylation of D-ribulose 1,5-bisphosphate, the primary event in carbon dioxide fixation, as well as the oxidative fragmentation of the pentose substrate in the photorespiration process. Both reactions occur simultaneously and in competition at the same active site. The polypeptide is Ribulose bisphosphate carboxylase large chain (Anthoceros angustus (Hornwort)).